A 276-amino-acid polypeptide reads, in one-letter code: Large ribosomal subunit protein uL2c (276 aa).

Residues 221–276 (RGSVMNPVDHPHGGGEGRAPIGRSRPVTPWGKPALGQKTRKPKKQSNKLILRKRKK) form a disordered region. A compositionally biased stretch (basic residues) spans 258–276 (KTRKPKKQSNKLILRKRKK).

The protein belongs to the universal ribosomal protein uL2 family. Part of the 50S ribosomal subunit.

It is found in the plastid. The protein localises to the chloroplast. The chain is Large ribosomal subunit protein uL2c (rpl2) from Stigeoclonium helveticum (Green alga).